Reading from the N-terminus, the 234-residue chain is Adenosine 5'-phosphosulfate reductase (234 aa).

C120, C121, C203, and C206 together coordinate [4Fe-4S] cluster. The active-site Nucleophile; cysteine thiosulfonate intermediate is C229.

The protein belongs to the PAPS reductase family. CysH subfamily. It depends on [4Fe-4S] cluster as a cofactor.

The protein localises to the cytoplasm. The catalysed reaction is [thioredoxin]-disulfide + sulfite + AMP + 2 H(+) = adenosine 5'-phosphosulfate + [thioredoxin]-dithiol. It participates in sulfur metabolism; hydrogen sulfide biosynthesis; sulfite from sulfate. Catalyzes the formation of sulfite from adenosine 5'-phosphosulfate (APS) using thioredoxin as an electron donor. This Bacillus mycoides (strain KBAB4) (Bacillus weihenstephanensis) protein is Adenosine 5'-phosphosulfate reductase.